We begin with the raw amino-acid sequence, 291 residues long: Small ribosomal subunit protein uS2 (291 aa).

The segment at 241-270 (KREPRQINRPVMSSENQAEQQTSVANENVQ) is disordered. Over residues 251–270 (VMSSENQAEQQTSVANENVQ) the composition is skewed to polar residues.

Belongs to the universal ribosomal protein uS2 family.

The polypeptide is Small ribosomal subunit protein uS2 (Mycoplasma capricolum subsp. capricolum (strain California kid / ATCC 27343 / NCTC 10154)).